The sequence spans 156 residues: Endogenous retrovirus group K member 104 Pro protein (156 aa).

The Peptidase A2 domain maps to 21 to 96 (FEGLVDTEAD…IPLNLWGQDL (76 aa)). Residue Asp-26 is part of the active site. A G-patch domain is found at 111 to 156 (YSPTSQKIMTKMGYIPGKGLGKNEDGIKVPVEAKINQKREGIGYPF).

This sequence belongs to the peptidase A2 family. HERV class-II K(HML-2) subfamily. Active as a homodimer. Post-translationally, autoproteolytically processed at the N-terminus. Expected C-terminal autoprocessing not detected. The sequence shown is that of the processed Pro protein.

The catalysed reaction is Processing at the authentic HIV-1 PR recognition site and release of the mature p17 matrix and the p24 capsid protein, as a result of the cleavage of the -SQNY-|-PIVQ- cleavage site.. Retroviral proteases have roles in the processing of the primary translation products and the maturation of the viral particle. Endogenous Pro proteins may have kept, lost or modified their original function during evolution. The chain is Endogenous retrovirus group K member 104 Pro protein (HERV-K104) from Homo sapiens (Human).